Reading from the N-terminus, the 165-residue chain is Crossover junction endodeoxyribonuclease RuvC (165 aa).

Catalysis depends on residues Asp7, Glu66, and Asp138. Residues Asp7, Glu66, and Asp138 each contribute to the Mg(2+) site.

This sequence belongs to the RuvC family. In terms of assembly, homodimer which binds Holliday junction (HJ) DNA. The HJ becomes 2-fold symmetrical on binding to RuvC with unstacked arms; it has a different conformation from HJ DNA in complex with RuvA. In the full resolvosome a probable DNA-RuvA(4)-RuvB(12)-RuvC(2) complex forms which resolves the HJ. Mg(2+) is required as a cofactor.

The protein localises to the cytoplasm. It catalyses the reaction Endonucleolytic cleavage at a junction such as a reciprocal single-stranded crossover between two homologous DNA duplexes (Holliday junction).. Functionally, the RuvA-RuvB-RuvC complex processes Holliday junction (HJ) DNA during genetic recombination and DNA repair. Endonuclease that resolves HJ intermediates. Cleaves cruciform DNA by making single-stranded nicks across the HJ at symmetrical positions within the homologous arms, yielding a 5'-phosphate and a 3'-hydroxyl group; requires a central core of homology in the junction. The consensus cleavage sequence is 5'-(A/T)TT(C/G)-3'. Cleavage occurs on the 3'-side of the TT dinucleotide at the point of strand exchange. HJ branch migration catalyzed by RuvA-RuvB allows RuvC to scan DNA until it finds its consensus sequence, where it cleaves and resolves the cruciform DNA. This chain is Crossover junction endodeoxyribonuclease RuvC, found in Ruegeria pomeroyi (strain ATCC 700808 / DSM 15171 / DSS-3) (Silicibacter pomeroyi).